The primary structure comprises 1323 residues: ABC transporter C family member 12 (1323 aa).

One can recognise an ABC transmembrane type-1 1 domain in the interval 110-396 (HCISLFFYSI…LPILIALGIQ (287 aa)). The next 6 membrane-spanning stretches (helical) occupy residues 111–131 (CISL…PEIL), 152–172 (MGYY…FCNY), 227–247 (VFGI…CLAL), 252–272 (IGWP…FNGL), 338–358 (ILIA…FSTY), and 375–395 (SYLN…ALGI). The ABC transporter 1 domain occupies 428–652 (VYMKNSTTTW…KLEFASLLQE (225 aa)). An ATP-binding site is contributed by 464–471 (GSVGSGKS). A disordered region spans residues 657–695 (ENTKGDDSDDDDDKKDDDKKEEKVEKPKQSDKDGTLISE). The segment covering 672–690 (DDDKKEEKVEKPKQSDKDG) has biased composition (basic and acidic residues). The next 5 membrane-spanning stretches (helical) occupy residues 712–732 (VTAG…LETG), 772–792 (IYIG…FSFF), 840–860 (LIAT…ATLI), 862–882 (ISII…LFFI), and 952–972 (WLGL…CIFI). An ABC transmembrane type-1 2 domain is found at 720–1010 (FLFAMILFLL…GVLQAADTET (291 aa)). Residues 1047–1281 (IKFDNLVMRY…QNGLLTWLVN (235 aa)) enclose the ABC transporter 2 domain. ATP is bound at residue 1081-1088 (GRTGAGKS).

This sequence belongs to the ABC transporter superfamily. ABCC family. Conjugate transporter (TC 3.A.1.208) subfamily.

It localises to the membrane. In Dictyostelium discoideum (Social amoeba), this protein is ABC transporter C family member 12 (abcC12).